The sequence spans 393 residues: NADH-quinone oxidoreductase subunit D (393 aa).

The protein belongs to the complex I 49 kDa subunit family. In terms of assembly, NDH-1 is composed of 14 different subunits. Subunits NuoB, C, D, E, F, and G constitute the peripheral sector of the complex.

The protein resides in the cell inner membrane. The catalysed reaction is a quinone + NADH + 5 H(+)(in) = a quinol + NAD(+) + 4 H(+)(out). Its function is as follows. NDH-1 shuttles electrons from NADH, via FMN and iron-sulfur (Fe-S) centers, to quinones in the respiratory chain. The immediate electron acceptor for the enzyme in this species is believed to be ubiquinone. Couples the redox reaction to proton translocation (for every two electrons transferred, four hydrogen ions are translocated across the cytoplasmic membrane), and thus conserves the redox energy in a proton gradient. In Ehrlichia canis (strain Jake), this protein is NADH-quinone oxidoreductase subunit D.